Here is a 162-residue protein sequence, read N- to C-terminus: NADH-quinone oxidoreductase subunit I (162 aa).

4Fe-4S ferredoxin-type domains follow at residues 52 to 82 (LRRY…IEAG) and 93 to 122 (VRYD…EGPN). [4Fe-4S] cluster contacts are provided by C62, C65, C68, C72, C102, C105, C108, and C112.

Belongs to the complex I 23 kDa subunit family. As to quaternary structure, NDH-1 is composed of 14 different subunits. Subunits NuoA, H, J, K, L, M, N constitute the membrane sector of the complex. [4Fe-4S] cluster serves as cofactor.

The protein resides in the cell inner membrane. It catalyses the reaction a quinone + NADH + 5 H(+)(in) = a quinol + NAD(+) + 4 H(+)(out). Its function is as follows. NDH-1 shuttles electrons from NADH, via FMN and iron-sulfur (Fe-S) centers, to quinones in the respiratory chain. The immediate electron acceptor for the enzyme in this species is believed to be ubiquinone. Couples the redox reaction to proton translocation (for every two electrons transferred, four hydrogen ions are translocated across the cytoplasmic membrane), and thus conserves the redox energy in a proton gradient. The polypeptide is NADH-quinone oxidoreductase subunit I (Nitrobacter hamburgensis (strain DSM 10229 / NCIMB 13809 / X14)).